The sequence spans 673 residues: Glycine--tRNA ligase beta subunit (673 aa).

The protein belongs to the class-II aminoacyl-tRNA synthetase family. Tetramer of two alpha and two beta subunits.

It is found in the cytoplasm. The enzyme catalyses tRNA(Gly) + glycine + ATP = glycyl-tRNA(Gly) + AMP + diphosphate. In Lactococcus lactis subsp. cremoris (strain MG1363), this protein is Glycine--tRNA ligase beta subunit.